Here is a 312-residue protein sequence, read N- to C-terminus: Dihydroorotate dehydrogenase B (NAD(+)), catalytic subunit (312 aa).

Residues Ser-23 and 47 to 48 each bind FMN; that span reads KA. Substrate is bound by residues Lys-47 and 71–75; that span reads NAIGL. 2 residues coordinate FMN: Asn-103 and Asn-131. A substrate-binding site is contributed by Asn-131. Cys-134 acts as the Nucleophile in catalysis. FMN-binding residues include Lys-171 and Ile-197. 198 to 199 serves as a coordination point for substrate; sequence NT. Residues Gly-223, 249-250, and 271-272 each bind FMN; these read GG and GT.

Belongs to the dihydroorotate dehydrogenase family. Type 1 subfamily. In terms of assembly, heterotetramer of 2 PyrK and 2 PyrD type B subunits. The cofactor is FMN.

Its subcellular location is the cytoplasm. The enzyme catalyses (S)-dihydroorotate + NAD(+) = orotate + NADH + H(+). It participates in pyrimidine metabolism; UMP biosynthesis via de novo pathway; orotate from (S)-dihydroorotate (NAD(+) route): step 1/1. Catalyzes the conversion of dihydroorotate to orotate with NAD(+) as electron acceptor. This Streptococcus pneumoniae (strain ATCC BAA-255 / R6) protein is Dihydroorotate dehydrogenase B (NAD(+)), catalytic subunit (pyrDB).